The primary structure comprises 234 residues: Orotidine 5'-phosphate decarboxylase (234 aa).

Residues D14, K36, 63 to 72 (DLKFHDIPNT), T123, R184, Q193, G213, and R214 each bind substrate. Residue K65 is the Proton donor of the active site.

Belongs to the OMP decarboxylase family. Type 1 subfamily. As to quaternary structure, homodimer.

It carries out the reaction orotidine 5'-phosphate + H(+) = UMP + CO2. It functions in the pathway pyrimidine metabolism; UMP biosynthesis via de novo pathway; UMP from orotate: step 2/2. Its function is as follows. Catalyzes the decarboxylation of orotidine 5'-monophosphate (OMP) to uridine 5'-monophosphate (UMP). This Psychromonas ingrahamii (strain DSM 17664 / CCUG 51855 / 37) protein is Orotidine 5'-phosphate decarboxylase.